A 30-amino-acid polypeptide reads, in one-letter code: Ampulexin 3 (30 aa).

A signal peptide spans 1-17; sequence MKAIMVLFYVMTLTIIG.

Monomer. In terms of tissue distribution, expressed in venom sac and, to a lesser extent, in venom gland. Not expressed in brain.

It localises to the secreted. The polypeptide is Ampulexin 3 (Ampulex compressa (Emerald cockroach wasp)).